The following is a 455-amino-acid chain: Fumarate hydratase class II (455 aa).

Residues 96–98 (SGT), 122–125 (HPND), 132–134 (SSN), and T180 contribute to the substrate site. H181 acts as the Proton donor/acceptor in catalysis. The active site involves S311. Residues S312 and 317–319 (KVN) each bind substrate.

Belongs to the class-II fumarase/aspartase family. Fumarase subfamily. As to quaternary structure, homotetramer.

The protein localises to the cytoplasm. The catalysed reaction is (S)-malate = fumarate + H2O. Its pathway is carbohydrate metabolism; tricarboxylic acid cycle; (S)-malate from fumarate: step 1/1. Involved in the TCA cycle. Catalyzes the stereospecific interconversion of fumarate to L-malate. The chain is Fumarate hydratase class II from Listeria monocytogenes serotype 4b (strain F2365).